The chain runs to 451 residues: Tubulin alpha-2 chain (451 aa).

Residue Q11 coordinates GTP. N6-acetyllysine is present on K40. E71, G144, T145, T179, N206, and N228 together coordinate GTP. E71 contacts Mg(2+). Residue E254 is part of the active site.

This sequence belongs to the tubulin family. In terms of assembly, dimer of alpha and beta chains. A typical microtubule is a hollow water-filled tube with an outer diameter of 25 nm and an inner diameter of 15 nM. Alpha-beta heterodimers associate head-to-tail to form protofilaments running lengthwise along the microtubule wall with the beta-tubulin subunit facing the microtubule plus end conferring a structural polarity. Microtubules usually have 13 protofilaments but different protofilament numbers can be found in some organisms and specialized cells. It depends on Mg(2+) as a cofactor. Undergoes a tyrosination/detyrosination cycle, the cyclic removal and re-addition of a C-terminal tyrosine residue by the enzymes tubulin tyrosine carboxypeptidase (TTCP) and tubulin tyrosine ligase (TTL), respectively. In terms of processing, acetylation of alpha chains at Lys-40 stabilizes microtubules and affects affinity and processivity of microtubule motors. This modification has a role in multiple cellular functions, ranging from cell motility, cell cycle progression or cell differentiation to intracellular trafficking and signaling.

The protein localises to the cytoplasm. The protein resides in the cytoskeleton. The enzyme catalyses GTP + H2O = GDP + phosphate + H(+). Functionally, tubulin is the major constituent of microtubules, a cylinder consisting of laterally associated linear protofilaments composed of alpha- and beta-tubulin heterodimers. Microtubules grow by the addition of GTP-tubulin dimers to the microtubule end, where a stabilizing cap forms. Below the cap, tubulin dimers are in GDP-bound state, owing to GTPase activity of alpha-tubulin. The polypeptide is Tubulin alpha-2 chain (TUBA) (Oryza sativa subsp. japonica (Rice)).